The chain runs to 654 residues: tRNA 5-methylaminomethyl-2-thiouridine biosynthesis bifunctional protein MnmC (654 aa).

The tRNA (mnm(5)s(2)U34)-methyltransferase stretch occupies residues methionine 1 to alanine 236. Positions isoleucine 260 to alanine 654 are FAD-dependent cmnm(5)s(2)U34 oxidoreductase.

In the N-terminal section; belongs to the methyltransferase superfamily. tRNA (mnm(5)s(2)U34)-methyltransferase family. The protein in the C-terminal section; belongs to the DAO family. FAD serves as cofactor.

The protein resides in the cytoplasm. It catalyses the reaction 5-aminomethyl-2-thiouridine(34) in tRNA + S-adenosyl-L-methionine = 5-methylaminomethyl-2-thiouridine(34) in tRNA + S-adenosyl-L-homocysteine + H(+). In terms of biological role, catalyzes the last two steps in the biosynthesis of 5-methylaminomethyl-2-thiouridine (mnm(5)s(2)U) at the wobble position (U34) in tRNA. Catalyzes the FAD-dependent demodification of cmnm(5)s(2)U34 to nm(5)s(2)U34, followed by the transfer of a methyl group from S-adenosyl-L-methionine to nm(5)s(2)U34, to form mnm(5)s(2)U34. This is tRNA 5-methylaminomethyl-2-thiouridine biosynthesis bifunctional protein MnmC from Burkholderia thailandensis (strain ATCC 700388 / DSM 13276 / CCUG 48851 / CIP 106301 / E264).